Consider the following 206-residue polypeptide: MNNDFNLLILSGPSGAGKSTLTKYLQEKIPKTHFSLSTTTRKPREGEVDGLHYNFVSEEEFKQGIEKGQFLEWAIVHNHYYGTSKIPVEKALKEGKIVIFDIDVQGHEILKKHYPNACSVFISTKNQEILKERLLLRGTDSKETIEKRLINAYKEMQCLESFDYLIINEDLEKSKEIILSIAKTLVHRLKAFNFEKICKAWKNESL.

A Guanylate kinase-like domain is found at F5–K183. G12 to S19 is a binding site for ATP.

It belongs to the guanylate kinase family.

Its subcellular location is the cytoplasm. It carries out the reaction GMP + ATP = GDP + ADP. Its function is as follows. Essential for recycling GMP and indirectly, cGMP. The polypeptide is Guanylate kinase (gmk) (Helicobacter pylori (strain J99 / ATCC 700824) (Campylobacter pylori J99)).